A 292-amino-acid chain; its full sequence is Mitochondrial fission regulator 1-like (292 aa).

Phosphothreonine is present on T30. Phosphoserine is present on S41. S103 is subject to Phosphoserine; by AMPK. A phosphoserine mark is found at S110, S224, and S225. Phosphoserine; by AMPK is present on S238. 2 positions are modified to phosphoserine: S261 and S273.

It belongs to the MTFR1 family. Phosphorylated by AMPK. Upon stress, phosphorylation at Ser-103 and Ser-238 by AMPK is sufficient to induce mitochondrial fragmentation.

The protein localises to the mitochondrion outer membrane. Its function is as follows. Mitochondrial protein required for adaptation of miochondrial dynamics to metabolic changes. Regulates mitochondrial morphology at steady state and mediates AMPK-dependent stress-induced mitochondrial fragmentation via the control of OPA1 levels. This is Mitochondrial fission regulator 1-like from Homo sapiens (Human).